We begin with the raw amino-acid sequence, 253 residues long: Sulfate transporter CysZ (253 aa).

A run of 4 helical transmembrane segments spans residues 31 to 51, 75 to 95, 151 to 171, and 222 to 242; these read FVIL…WWLF, LLWP…FSTI, IVLL…PVLW, and IPLL…AMWV.

The protein belongs to the CysZ family.

It localises to the cell inner membrane. High affinity, high specificity proton-dependent sulfate transporter, which mediates sulfate uptake. Provides the sulfur source for the cysteine synthesis pathway. The chain is Sulfate transporter CysZ from Escherichia coli O7:K1 (strain IAI39 / ExPEC).